An 89-amino-acid polypeptide reads, in one-letter code: Small ribosomal subunit protein uS15 (89 aa).

The protein belongs to the universal ribosomal protein uS15 family. Part of the 30S ribosomal subunit. Forms a bridge to the 50S subunit in the 70S ribosome, contacting the 23S rRNA.

Functionally, one of the primary rRNA binding proteins, it binds directly to 16S rRNA where it helps nucleate assembly of the platform of the 30S subunit by binding and bridging several RNA helices of the 16S rRNA. Forms an intersubunit bridge (bridge B4) with the 23S rRNA of the 50S subunit in the ribosome. The polypeptide is Small ribosomal subunit protein uS15 (Azorhizobium caulinodans (strain ATCC 43989 / DSM 5975 / JCM 20966 / LMG 6465 / NBRC 14845 / NCIMB 13405 / ORS 571)).